The sequence spans 89 residues: Small ribosomal subunit protein bS20 (89 aa).

2 stretches are compositionally biased toward basic residues: residues 1 to 10 (MANIKSKIKS) and 17 to 29 (ARKRNSMIKSRVK). The interval 1 to 29 (MANIKSKIKSIKTMEKARKRNSMIKSRVK) is disordered.

The protein belongs to the bacterial ribosomal protein bS20 family.

Functionally, binds directly to 16S ribosomal RNA. This chain is Small ribosomal subunit protein bS20, found in Mycoplasmopsis pulmonis (strain UAB CTIP) (Mycoplasma pulmonis).